The following is a 152-amino-acid chain: Ribosome maturation factor RimP (152 aa).

Belongs to the RimP family.

It localises to the cytoplasm. Functionally, required for maturation of 30S ribosomal subunits. In Photorhabdus laumondii subsp. laumondii (strain DSM 15139 / CIP 105565 / TT01) (Photorhabdus luminescens subsp. laumondii), this protein is Ribosome maturation factor RimP.